The following is a 144-amino-acid chain: Mediator of RNA polymerase II transcription subunit 21 (144 aa).

Belongs to the Mediator complex subunit 21 family. Component of the Mediator complex, which is composed of MED1, MED4, MED6, MED7, MED8, MED9, MED10, MED11, MED12, MED13, MED13L, MED14, MED15, MED16, MED17, MED18, MED19, MED20, MED21, MED22, MED23, MED24, MED25, MED26, MED27, MED29, MED30, MED31, CCNC, CDK8 and CDC2L6/CDK11. The MED12, MED13, CCNC and CDK8 subunits form a distinct module termed the CDK8 module. Mediator containing the CDK8 module is less active than Mediator lacking this module in supporting transcriptional activation. Individual preparations of the Mediator complex lacking one or more distinct subunits have been variously termed ARC, CRSP, DRIP, PC2, SMCC and TRAP. Interacts with PPARG. Interacts with THRA in a ligand-dependent fashion.

Its subcellular location is the nucleus. Component of the Mediator complex, a coactivator involved in the regulated transcription of nearly all RNA polymerase II-dependent genes. Mediator functions as a bridge to convey information from gene-specific regulatory proteins to the basal RNA polymerase II transcription machinery. Mediator is recruited to promoters by direct interactions with regulatory proteins and serves as a scaffold for the assembly of a functional preinitiation complex with RNA polymerase II and the general transcription factors. The chain is Mediator of RNA polymerase II transcription subunit 21 (MED21) from Pongo abelii (Sumatran orangutan).